The primary structure comprises 87 residues: Retinal rod rhodopsin-sensitive cGMP 3',5'-cyclic phosphodiesterase subunit gamma (87 aa).

Met-1 is modified (N-acetylmethionine). The segment covering 1–12 (MNLEPPKGEIRS) has biased composition (basic and acidic residues). The disordered stretch occupies residues 1 to 55 (MNLEPPKGEIRSATRVIGGPVTPRKGPPKFKQRQTRQFKSKPPKKGVQGFGDDIP). Positions 26–44 (GPPKFKQRQTRQFKSKPPK) are enriched in basic residues.

It belongs to the rod/cone cGMP-PDE gamma subunit family. As to quaternary structure, oligomer composed of two catalytic chains (alpha and beta), an inhibitory chain (gamma) and the delta chain.

The catalysed reaction is 3',5'-cyclic GMP + H2O = GMP + H(+). Participates in processes of transmission and amplification of the visual signal. cGMP-PDEs are the effector molecules in G-protein-mediated phototransduction in vertebrate rods and cones. This Mus musculus (Mouse) protein is Retinal rod rhodopsin-sensitive cGMP 3',5'-cyclic phosphodiesterase subunit gamma (Pde6g).